The primary structure comprises 614 residues: DNA mismatch repair protein MutL (614 aa).

This sequence belongs to the DNA mismatch repair MutL/HexB family.

Its function is as follows. This protein is involved in the repair of mismatches in DNA. It is required for dam-dependent methyl-directed DNA mismatch repair. May act as a 'molecular matchmaker', a protein that promotes the formation of a stable complex between two or more DNA-binding proteins in an ATP-dependent manner without itself being part of a final effector complex. This Chlorobium phaeovibrioides (strain DSM 265 / 1930) (Prosthecochloris vibrioformis (strain DSM 265)) protein is DNA mismatch repair protein MutL.